We begin with the raw amino-acid sequence, 1133 residues long: DNA repair protein rad8 (1133 aa).

Disordered regions lie at residues 1–34 and 392–413; these read MKRK…SKPN and PEAR…EEDV. Ser18 bears the Phosphoserine mark. In terms of domain architecture, Helicase ATP-binding spans 516–705; it reads PNSMPYHRGG…YSLIKFMRYE (190 aa). 529–536 contacts ATP; that stretch reads DEMGLGKT. The short motif at 656–659 is the DEGH box element; sequence DEGH. The segment at 877 to 923 adopts an RING-type zinc-finger fold; sequence CPICCNEPIQNPLLLNCKHACCGDCLSEHIQYQKRRNIIPPLCHTCR. Residues 971 to 1125 form the Helicase C-terminal domain; it reads QLRQLTHSSE…EGKQQVQSIE (155 aa).

The protein belongs to the SNF2/RAD54 helicase family.

It localises to the cytoplasm. The protein localises to the nucleus. In terms of biological role, probable helicase, member of the UBC2/RAD6 epistasis group. Functions with DNA repair protein rad18 in error-free postreplication DNA repair. Involved in the maintenance of wild-type rates of instability of simple repetitive sequences such as poly(GT) repeats. Plays a role in surviving topoisomerase-mediated DNA damage. The chain is DNA repair protein rad8 from Schizosaccharomyces pombe (strain 972 / ATCC 24843) (Fission yeast).